We begin with the raw amino-acid sequence, 201 residues long: Small ribosomal subunit protein uS4c (201 aa).

Residues 89 to 152 (MRLDNILFRL…NSRTLVQNLL (64 aa)) form the S4 RNA-binding domain.

Belongs to the universal ribosomal protein uS4 family. Part of the 30S ribosomal subunit. Contacts protein S5. The interaction surface between S4 and S5 is involved in control of translational fidelity.

It localises to the plastid. It is found in the chloroplast. Functionally, one of the primary rRNA binding proteins, it binds directly to 16S rRNA where it nucleates assembly of the body of the 30S subunit. In terms of biological role, with S5 and S12 plays an important role in translational accuracy. The protein is Small ribosomal subunit protein uS4c (rps4) of Arabidopsis thaliana (Mouse-ear cress).